The following is a 171-amino-acid chain: Glutamyl-tRNA(Gln) amidotransferase subunit F, mitochondrial (171 aa).

This sequence belongs to the GatF family. Subunit of the heterotrimeric GatFAB amidotransferase (AdT) complex, composed of A, B and F subunits.

It localises to the mitochondrion inner membrane. The catalysed reaction is L-glutamyl-tRNA(Gln) + L-glutamine + ATP + H2O = L-glutaminyl-tRNA(Gln) + L-glutamate + ADP + phosphate + H(+). In terms of biological role, allows the formation of correctly charged Gln-tRNA(Gln) through the transamidation of misacylated Glu-tRNA(Gln) in the mitochondria. The reaction takes place in the presence of glutamine and ATP through an activated gamma-phospho-Glu-tRNA(Gln). Required for proper protein synthesis within the mitochondrion. The protein is Glutamyl-tRNA(Gln) amidotransferase subunit F, mitochondrial of Zygosaccharomyces rouxii (strain ATCC 2623 / CBS 732 / NBRC 1130 / NCYC 568 / NRRL Y-229).